The primary structure comprises 449 residues: Tubulin alpha-8 chain (449 aa).

The MREC motif motif lies at 1–4 (MREC). GTP contacts are provided by Gln-11, Glu-71, Ser-140, Gly-144, Thr-145, Thr-179, Asn-206, and Asn-228. Position 71 (Glu-71) interacts with Mg(2+). Glu-254 is an active-site residue.

It belongs to the tubulin family. As to quaternary structure, dimer of alpha and beta chains. A typical microtubule is a hollow water-filled tube with an outer diameter of 25 nm and an inner diameter of 15 nM. Alpha-beta heterodimers associate head-to-tail to form protofilaments running lengthwise along the microtubule wall with the beta-tubulin subunit facing the microtubule plus end conferring a structural polarity. Microtubules usually have 13 protofilaments but different protofilament numbers can be found in some organisms and specialized cells. Requires Mg(2+) as cofactor. Post-translationally, some glutamate residues at the C-terminus are polyglycylated, resulting in polyglycine chains on the gamma-carboxyl group. Glycylation is mainly limited to tubulin incorporated into axonemes (cilia and flagella) whereas glutamylation is prevalent in neuronal cells, centrioles, axonemes, and the mitotic spindle. Both modifications can coexist on the same protein on adjacent residues, and lowering polyglycylation levels increases polyglutamylation, and reciprocally. Cilia and flagella glycylation is required for their stability and maintenance. Flagella glycylation controls sperm motility. Some glutamate residues at the C-terminus are polyglutamylated, resulting in polyglutamate chains on the gamma-carboxyl group. Polyglutamylation plays a key role in microtubule severing by spastin (SPAST). SPAST preferentially recognizes and acts on microtubules decorated with short polyglutamate tails: severing activity by SPAST increases as the number of glutamates per tubulin rises from one to eight, but decreases beyond this glutamylation threshold. Glutamylation is also involved in cilia motility. In terms of processing, the C-terminal phenylalanine residue is cleaved by MATCAP1/KIAA0895L.

The protein resides in the cytoplasm. It is found in the cytoskeleton. The enzyme catalyses GTP + H2O = GDP + phosphate + H(+). Functionally, tubulin is the major constituent of microtubules, a cylinder consisting of laterally associated linear protofilaments composed of alpha- and beta-tubulin heterodimers. Microtubules grow by the addition of GTP-tubulin dimers to the microtubule end, where a stabilizing cap forms. Below the cap, tubulin dimers are in GDP-bound state, owing to GTPase activity of alpha-tubulin. This chain is Tubulin alpha-8 chain (Tuba8), found in Rattus norvegicus (Rat).